The following is a 1581-amino-acid chain: Mediator of RNA polymerase II transcription subunit 1 (1581 aa).

The interval 1–670 (MKAQGETEES…YGSSPLERQN (670 aa)) is interaction with the Mediator complex and THRA. Residues 16 to 590 (MSSLLERLHA…SIKDRHESVG (575 aa)) form an interaction with ESR1 region. Interaction with the Mediator complex regions lie at residues 108–212 (FYVE…GYLT) and 215–390 (SGGH…SLQG). Positions 405–644 (PLILNLIRHQ…MAGNTKNHPM (240 aa)) are interaction with THRA. Residues 542–789 (PASSPGYGMT…TDILSDIAEE (248 aa)) form an interaction with VDR region. A Phosphoserine modification is found at Ser-588. Residues 604–608 (LTSLL) carry the LXXLL motif 1 motif. Disordered regions lie at residues 609-705 (QITG…HQTE), 792-820 (KLPS…QSTL), 874-893 (SQSG…GDND), and 948-1566 (EHHS…DFMI). Positions 622 to 632 (PTPPHHTPPPV) are enriched in pro residues. Positions 622-701 (PTPPHHTPPP…SSRLPPEKPK (80 aa)) are interaction with PPARGC1A and THRA. The LXXLL motif 2 signature appears at 645 to 649 (LMNLL). Residues 655–675 (QDFSTLYGSSPLERQNSSSGS) show a composition bias toward polar residues. The tract at residues 656-1066 (DFSTLYGSSP…TPPIPKITIQ (411 aa)) is interaction with ESR1. Ser-664 is subject to Phosphoserine. Residues 681-715 (CSGSNKTKKKKSSRLPPEKPKHQTEDDFQRELFSM) are interaction with GATA1. Over residues 696–705 (PPEKPKHQTE) the composition is skewed to basic and acidic residues. Ser-795 carries the phosphoserine modification. At Thr-805 the chain carries Phosphothreonine. The segment covering 808–820 (RDSSSSGHSQSTL) has biased composition (polar residues). The short motif at 875 to 902 (QSGFGEEYFDESSQSGDNDDFKGFASQA) is the Integrase domain-binding motif (IBM) element. Residues Ser-887 and Ser-953 each carry the phosphoserine modification. The segment covering 963-974 (LGKEKTQKRVKE) has biased composition (basic and acidic residues). The residue at position 1032 (Thr-1032) is a Phosphothreonine; by MAPK1 or MAPK3. Positions 1034-1045 (PTSTGGSKSPGS) are enriched in low complexity. Thr-1051 and Thr-1057 each carry phosphothreonine. Composition is skewed to low complexity over residues 1078 to 1094 (SSHS…SSGS) and 1101 to 1156 (SSSS…PGSS). Phosphoserine is present on Ser-1156. Positions 1162 to 1195 (GLSSGSSSTKMKPQGKPSSLMNPSLSKPNISPSH) are enriched in polar residues. The residue at position 1177 (Lys-1177) is an N6-acetyllysine. At Ser-1207 the chain carries Phosphoserine. A Phosphothreonine modification is found at Thr-1215. Low complexity-rich tracts occupy residues 1218–1227 (SSKAKSPISS) and 1234–1293 (MSGT…SKGK). Ser-1223 carries the phosphoserine modification. The segment at 1249–1421 (LGSSGSLSQK…KPGESSGEGL (173 aa)) is interaction with TP53. A Phosphoserine modification is found at Ser-1302. Polar residues predominate over residues 1330-1345 (GVSTNSSSHPMSSKHN). Ser-1347 bears the Phosphoserine mark. Positions 1352–1364 (QGKREKSDKDKSK) are enriched in basic and acidic residues. Residues Ser-1403 and Ser-1433 each carry the phosphoserine modification. 2 stretches are compositionally biased toward polar residues: residues 1425-1440 (MASS…SGST) and 1448-1482 (PSHS…SPSS). Thr-1440 is modified (phosphothreonine). Thr-1457 bears the Phosphothreonine; by MAPK1 or MAPK3 mark. A phosphoserine mark is found at Ser-1463, Ser-1465, Ser-1479, Ser-1481, and Ser-1482. Residues 1496 to 1505 (KHKKHKKEKK) are compositionally biased toward basic residues. Positions 1506 to 1522 (KVKDKDRDRDRDKDRDK) are enriched in basic and acidic residues. Residue Lys-1529 is modified to N6-acetyllysine. Residues 1533 to 1552 (WSKSPISSDQSLSMTSNTIL) show a composition bias toward polar residues.

The protein belongs to the Mediator complex subunit 1 family. In terms of assembly, component of the Mediator complex, which is composed of MED1, MED4, MED6, MED7, MED8, MED9, MED10, MED11, MED12, MED13, MED13L, MED14, MED15, MED16, MED17, MED18, MED19, MED20, MED21, MED22, MED23, MED24, MED25, MED26, MED27, MED29, MED30, MED31, CCNC, CDK8 and CDC2L6/CDK11. The MED12, MED13, CCNC and CDK8 subunits form a distinct module termed the CDK8 module. Mediator containing the CDK8 module is less active than Mediator lacking this module in supporting transcriptional activation. Individual preparations of the Mediator complex lacking one or more distinct subunits have been variously termed ARC, CRSP, DRIP, PC2, SMCC and TRAP. This subunit specifically interacts with a number of nuclear receptors in a ligand-dependent fashion including AR, ESR1, ESR2, PPARA, PPARG, RORA, RXRA, RXRG, THRA, THRB and VDR. Interacts with CTNNB1, GABPA, GLI3, PPARGC1A and TP53. Interacts with YWHAH. Interacts with CLOCK; this interaction requires the presence of THRAP3. Interacts with GATA1 and CCAR1. Interacts with NR4A3. Interacts (via IBM motif) with PSIP1 (via IBD domain); phosphorylation increases its affinity for PSIP1. Interacts with USP22. In terms of processing, phosphorylated by MAPK1 or MAPK3 during G2/M phase which may enhance protein stability and promote entry into the nucleolus. Phosphorylation increases its interaction with PSIP1. In terms of tissue distribution, ubiquitously expressed.

The protein resides in the nucleus. Component of the Mediator complex, a coactivator involved in the regulated transcription of nearly all RNA polymerase II-dependent genes. Mediator functions as a bridge to convey information from gene-specific regulatory proteins to the basal RNA polymerase II transcription machinery. Mediator is recruited to promoters by direct interactions with regulatory proteins and serves as a scaffold for the assembly of a functional preinitiation complex with RNA polymerase II and the general transcription factors. Acts as a coactivator for GATA1-mediated transcriptional activation during erythroid differentiation of K562 erythroleukemia cells. The protein is Mediator of RNA polymerase II transcription subunit 1 (MED1) of Homo sapiens (Human).